Reading from the N-terminus, the 301-residue chain is Glycine--tRNA ligase alpha subunit (301 aa).

Belongs to the class-II aminoacyl-tRNA synthetase family. As to quaternary structure, tetramer of two alpha and two beta subunits.

Its subcellular location is the cytoplasm. It catalyses the reaction tRNA(Gly) + glycine + ATP = glycyl-tRNA(Gly) + AMP + diphosphate. This chain is Glycine--tRNA ligase alpha subunit, found in Pseudoalteromonas atlantica (strain T6c / ATCC BAA-1087).